Reading from the N-terminus, the 264-residue chain is 3-methyl-2-oxobutanoate hydroxymethyltransferase (264 aa).

Residues Asp-45 and Asp-84 each coordinate Mg(2+). Residues 45–46 (DS), Asp-84, and Lys-112 contribute to the 3-methyl-2-oxobutanoate site. Glu-114 contacts Mg(2+). Glu-181 (proton acceptor) is an active-site residue.

This sequence belongs to the PanB family. As to quaternary structure, homodecamer; pentamer of dimers. It depends on Mg(2+) as a cofactor.

It is found in the cytoplasm. It catalyses the reaction 3-methyl-2-oxobutanoate + (6R)-5,10-methylene-5,6,7,8-tetrahydrofolate + H2O = 2-dehydropantoate + (6S)-5,6,7,8-tetrahydrofolate. It participates in cofactor biosynthesis; (R)-pantothenate biosynthesis; (R)-pantoate from 3-methyl-2-oxobutanoate: step 1/2. Its function is as follows. Catalyzes the reversible reaction in which hydroxymethyl group from 5,10-methylenetetrahydrofolate is transferred onto alpha-ketoisovalerate to form ketopantoate. The chain is 3-methyl-2-oxobutanoate hydroxymethyltransferase from Escherichia coli O8 (strain IAI1).